A 159-amino-acid chain; its full sequence is Ribosomal RNA large subunit methyltransferase H (159 aa).

Residues Leu-76, Gly-108, and 127-132 (FSKMTF) contribute to the S-adenosyl-L-methionine site.

Belongs to the RNA methyltransferase RlmH family. In terms of assembly, homodimer.

It is found in the cytoplasm. It catalyses the reaction pseudouridine(1915) in 23S rRNA + S-adenosyl-L-methionine = N(3)-methylpseudouridine(1915) in 23S rRNA + S-adenosyl-L-homocysteine + H(+). Its function is as follows. Specifically methylates the pseudouridine at position 1915 (m3Psi1915) in 23S rRNA. The protein is Ribosomal RNA large subunit methyltransferase H of Geobacillus kaustophilus (strain HTA426).